Consider the following 376-residue polypeptide: Transcription factor Sp6 (376 aa).

The segment at 1 to 70 is disordered; the sequence is MLTAVCGSLG…VDFSQGYELP (70 aa). The 9aaTAD signature appears at 118-126; the sequence is GSWWDLHPG. The segment at 164 to 224 is disordered; it reads PPPHPHPHHL…SRRSVPRSSG (61 aa). C2H2-type zinc fingers lie at residues 254-278, 284-308, and 314-336; these read HNCH…LRWH, FVCN…LQTH, and FPCA…MKTH. The span at 334 to 343 shows a compositional bias: basic and acidic residues; the sequence is KTHEGAKEEA. The interval 334 to 376 is disordered; that stretch reads KTHEGAKEEAAAAAQGEGKAGGVVEPPGGKGKREAEGSSASSN. Low complexity predominate over residues 344 to 360; it reads AAAAQGEGKAGGVVEPP.

This sequence belongs to the Sp1 C2H2-type zinc-finger protein family. Ubiquitous. Preferentially expressed by proliferating epithelial cells of teeth, hair follicles and limbs.

It is found in the nucleus. Promotes cell proliferation. Plays a role in tooth germ growth. Plays a role in the control of enamel mineralization. Binds the AMBN promoter. This Mus musculus (Mouse) protein is Transcription factor Sp6 (Sp6).